Reading from the N-terminus, the 155-residue chain is UPF0178 protein Gmet_1725 (155 aa).

Belongs to the UPF0178 family.

In Geobacter metallireducens (strain ATCC 53774 / DSM 7210 / GS-15), this protein is UPF0178 protein Gmet_1725.